A 110-amino-acid polypeptide reads, in one-letter code: uncharacterized protein (110 aa).

A disordered region spans residues 1-72; it reads MWRSSNQRGV…NHRNIHLRNP (72 aa). Basic residues predominate over residues 10–23; sequence VSRRRDKSMRKYTR. Polar residues predominate over residues 48 to 57; it reads KNTYTGNISS.

This is an uncharacterized protein from Human herpesvirus 6A (strain Uganda-1102) (HHV-6 variant A).